A 131-amino-acid chain; its full sequence is Sec-independent protein translocase protein TatB (131 aa).

A helical membrane pass occupies residues 2–22; it reads LGSLSWEHMLVLVVVGLVVLG. The disordered stretch occupies residues 96–131; sequence AFDRPVNGAAAQPPPAPAPPPEPHRPGQTPFDADAT. Residues 107–116 show a composition bias toward pro residues; that stretch reads QPPPAPAPPP.

Belongs to the TatB family. The Tat system comprises two distinct complexes: a TatABC complex, containing multiple copies of TatA, TatB and TatC subunits, and a separate TatA complex, containing only TatA subunits. Substrates initially bind to the TatABC complex, which probably triggers association of the separate TatA complex to form the active translocon.

Its subcellular location is the cell membrane. Its function is as follows. Part of the twin-arginine translocation (Tat) system that transports large folded proteins containing a characteristic twin-arginine motif in their signal peptide across membranes. Together with TatC, TatB is part of a receptor directly interacting with Tat signal peptides. TatB may form an oligomeric binding site that transiently accommodates folded Tat precursor proteins before their translocation. The polypeptide is Sec-independent protein translocase protein TatB (Mycobacterium avium (strain 104)).